Consider the following 524-residue polypeptide: L-tyrosine:2-oxoglutarate aminotransferase atrD (524 aa).

This sequence belongs to the class-I pyridoxal-phosphate-dependent aminotransferase family. Requires pyridoxal 5'-phosphate as cofactor.

The enzyme catalyses L-tyrosine + 2-oxoglutarate = 3-(4-hydroxyphenyl)pyruvate + L-glutamate. It participates in secondary metabolite biosynthesis. Functionally, the L-tyrosine:2-oxoglutarate aminotransferase atrD and the atromentin synthetase atrA catalyze consecutive steps to turn over L-tyrosine into atromentin, which represents the generic precursor molecule for the entire terphenylquinone and pulvinic acid family of pigments, which are widely distributed secondary metabolites in homobasidiomycetes. The first step is catalyzed by atrD which converts L-tyrosine in to 4-hydroxyphenylpyruvate (4-HPP). Adenylation of two 4-HPP monomers by the atrA adenylation (A) domain, ester bond formation between monomers and atrA, and symmetric C-C-bond formation between two monomers by atrA leads to atromentin. This is L-tyrosine:2-oxoglutarate aminotransferase atrD from Tapinella panuoides (Oyster rollrim mushroom).